A 211-amino-acid chain; its full sequence is MQSKRPIIIGIAGGSGSGKTTIAHEIYDQLQQDDHILIMTQDSYYKNNDNLSMADRKKINYDHPDAFDMPLLVEQLRQLMDYKAVEMPVYDFTAHTRSEKTIHTEPADIIILEGILVLGEENLRDLMSIKVFVDTDDDIRFIRRLERDTQERGRSVESVINQYLATVKPMYNQFIEPTKRYADIIVPEGGENDVAIDMLTTKIRSVLSTVK.

Residue 13 to 20 (GGSGSGKT) participates in ATP binding.

This sequence belongs to the uridine kinase family.

The protein resides in the cytoplasm. It catalyses the reaction uridine + ATP = UMP + ADP + H(+). The catalysed reaction is cytidine + ATP = CMP + ADP + H(+). Its pathway is pyrimidine metabolism; CTP biosynthesis via salvage pathway; CTP from cytidine: step 1/3. It participates in pyrimidine metabolism; UMP biosynthesis via salvage pathway; UMP from uridine: step 1/1. This chain is Uridine kinase, found in Lactobacillus johnsonii (strain CNCM I-12250 / La1 / NCC 533).